The chain runs to 295 residues: MALLVRVLRNQTSISQWVPVCSQLVSVSPTQRQWSSTSQWLQKNQSRVCLGSEQTVGADTAQNRKYHNTSKLLTTQDFPQPVEEKVGPFTKIIEAMGFTGPLKYSKWKIKIAALRMYTSCVEKTDFEEFFLRCQMPDTFNSWFLITLLHVWMCLVRMKQEGRTGKYMCRIIVHFMWEDVEQRGRVMGVNSYILKKNMALMTNNFYAAILGYDEGILSDDHGLAAALWRTFFNQKCEDPRQLELLVEYVRKQMQYLDSMNGEDLLLTGEVRWRPLVEKNPQSILKPHAPTYNDEGL.

Belongs to the CBP3 family. Interacts with UQCC2. Interacts with UQCC3. Forms a complex, named COMB/coordinator of mitochondrial CYTB biogenesis, composed of UQCC1, UQCC2, UQCC4, UQCC5 and UQCC6; stabilizes nascent cytochrome b/MT-CYB and promotes its membrane insertion. Forms a complex, named COMA, composed of UQCC1, UQCC2 and UQCC4; activates MT-CYB translation. Forms a complex, named COMC, composed of UQCC1, UQCC2; UQCC3 and UQCC4; mediates MT-CYB hemylation and association with the first nuclear-encoded CIII subunit UQCRQ. In the brain it is restricted to the olfactory bulb, the hippocampus, the piriform cortex and the Purkinje cells.

It localises to the mitochondrion inner membrane. The protein resides in the cytoplasmic vesicle. In terms of biological role, required for the assembly of the ubiquinol-cytochrome c reductase complex (mitochondrial respiratory chain complex III or cytochrome b-c1 complex). Involved in cytochrome b translation and/or stability. This is Ubiquinol-cytochrome c reductase complex assembly factor 1 (Uqcc1) from Mus musculus (Mouse).